We begin with the raw amino-acid sequence, 153 residues long: Cell division protein SepF (153 aa).

This sequence belongs to the SepF family. In terms of assembly, homodimer. Interacts with FtsZ.

The protein resides in the cytoplasm. In terms of biological role, cell division protein that is part of the divisome complex and is recruited early to the Z-ring. Probably stimulates Z-ring formation, perhaps through the cross-linking of FtsZ protofilaments. Its function overlaps with FtsA. The chain is Cell division protein SepF from Clostridium tetani (strain Massachusetts / E88).